We begin with the raw amino-acid sequence, 163 residues long: Crossover junction endodeoxyribonuclease RuvC (163 aa).

Active-site residues include D7, E67, and D140. Residues D7, E67, and D140 each coordinate Mg(2+).

It belongs to the RuvC family. As to quaternary structure, homodimer which binds Holliday junction (HJ) DNA. The HJ becomes 2-fold symmetrical on binding to RuvC with unstacked arms; it has a different conformation from HJ DNA in complex with RuvA. In the full resolvosome a probable DNA-RuvA(4)-RuvB(12)-RuvC(2) complex forms which resolves the HJ. Requires Mg(2+) as cofactor.

The protein localises to the cytoplasm. It catalyses the reaction Endonucleolytic cleavage at a junction such as a reciprocal single-stranded crossover between two homologous DNA duplexes (Holliday junction).. Its function is as follows. The RuvA-RuvB-RuvC complex processes Holliday junction (HJ) DNA during genetic recombination and DNA repair. Endonuclease that resolves HJ intermediates. Cleaves cruciform DNA by making single-stranded nicks across the HJ at symmetrical positions within the homologous arms, yielding a 5'-phosphate and a 3'-hydroxyl group; requires a central core of homology in the junction. The consensus cleavage sequence is 5'-(A/T)TT(C/G)-3'. Cleavage occurs on the 3'-side of the TT dinucleotide at the point of strand exchange. HJ branch migration catalyzed by RuvA-RuvB allows RuvC to scan DNA until it finds its consensus sequence, where it cleaves and resolves the cruciform DNA. The chain is Crossover junction endodeoxyribonuclease RuvC from Desulforamulus reducens (strain ATCC BAA-1160 / DSM 100696 / MI-1) (Desulfotomaculum reducens).